Consider the following 2925-residue polypeptide: TPR and ankyrin repeat-containing protein 1 (2925 aa).

TPR repeat units lie at residues 15–48 (AVLL…DPTY) and 50–82 (KGYY…VQRS). ANK repeat units lie at residues 168–198 (EKYV…SVET), 203–232 (PLHA…EWKG), 240–276 (DGCT…DPTL), 463–492 (SQER…DPRA), 497–518 (EGDT…DIGF), and 546–575 (NGNT…KFDI). 3 disordered regions span residues 612 to 669 (SRQD…LPGT), 706 to 741 (PEDC…DCSE), and 1077 to 1103 (VEPG…SIEV). A compositionally biased stretch (polar residues) spans 624–641 (SKSTAPGHTSQLKSQGSF). Basic and acidic residues predominate over residues 720 to 730 (AGKEGKKDDKP). Acidic residues predominate over residues 1085–1103 (GGEEEEEEEDEEEEDSIEV). 2 TPR repeats span residues 1699–1732 (PAEW…EKEK) and 1793–1826 (LGKI…DLAL). Residues 2301-2330 (EEFEKLLHQEEDNYNRELKALESEKDERGR) are a coiled coil.

The sequence is that of TPR and ankyrin repeat-containing protein 1 (TRANK1) from Homo sapiens (Human).